The chain runs to 325 residues: 6-phosphogluconolactonase 3, chloroplastic (325 aa).

The N-terminal 68 residues, 1–68 (MASSSCFLRS…KSSDTRRKVK (68 aa)), are a transit peptide targeting the chloroplast. Positions 51 to 73 (SIGTGSTKKSSDTRRKVKSMATT) are disordered. The Microbody targeting signal signature appears at 323 to 325 (SKL).

This sequence belongs to the glucosamine/galactosamine-6-phosphate isomerase family. 6-phosphogluconolactonase subfamily. As to quaternary structure, interacts with TRXM2. Expressed in roots, leaves and shoots.

Its subcellular location is the plastid. The protein localises to the chloroplast. It is found in the peroxisome. The enzyme catalyses 6-phospho-D-glucono-1,5-lactone + H2O = 6-phospho-D-gluconate + H(+). Its pathway is carbohydrate degradation; pentose phosphate pathway; D-ribulose 5-phosphate from D-glucose 6-phosphate (oxidative stage): step 2/3. Functionally, catalyzes the hydrolysis of 6-phosphogluconolactone to 6-phosphogluconate. Involved in the regulation of cellular redox state; enzymatic activity is required for this function. Required for sugar-dependent expression of nitrate assimilation genes in the nucleus of root cells. The sequence is that of 6-phosphogluconolactonase 3, chloroplastic from Arabidopsis thaliana (Mouse-ear cress).